A 234-amino-acid polypeptide reads, in one-letter code: Peptidase E (234 aa).

Catalysis depends on charge relay system residues Ser-120, Asp-135, and His-157.

Belongs to the peptidase S51 family.

It localises to the cytoplasm. The catalysed reaction is Dipeptidase E catalyzes the hydrolysis of dipeptides Asp-|-Xaa. It does not act on peptides with N-terminal Glu, Asn or Gln, nor does it cleave isoaspartyl peptides.. Functionally, hydrolyzes dipeptides containing N-terminal aspartate residues. May play a role in allowing the cell to use peptide aspartate to spare carbon otherwise required for the synthesis of the aspartate family of amino acids. This Salmonella gallinarum (strain 287/91 / NCTC 13346) protein is Peptidase E.